Consider the following 100-residue polypeptide: Large ribosomal subunit protein uL23 (100 aa).

This sequence belongs to the universal ribosomal protein uL23 family. Part of the 50S ribosomal subunit. Contacts protein L29, and trigger factor when it is bound to the ribosome.

Functionally, one of the early assembly proteins it binds 23S rRNA. One of the proteins that surrounds the polypeptide exit tunnel on the outside of the ribosome. Forms the main docking site for trigger factor binding to the ribosome. This Proteus mirabilis (strain HI4320) protein is Large ribosomal subunit protein uL23.